A 344-amino-acid chain; its full sequence is Sulfate/thiosulfate import ATP-binding protein CysA (344 aa).

The region spanning 3-237 is the ABC transporter domain; that stretch reads IEVRNLVKKF…PATAFVHGFI (235 aa). 35 to 42 provides a ligand contact to ATP; the sequence is GPSGSGKT.

This sequence belongs to the ABC transporter superfamily. Sulfate/tungstate importer (TC 3.A.1.6) family. In terms of assembly, the complex is composed of two ATP-binding proteins (CysA), two transmembrane proteins (CysT and CysW) and a solute-binding protein (CysP).

The protein localises to the cell inner membrane. The catalysed reaction is sulfate(out) + ATP + H2O = sulfate(in) + ADP + phosphate + H(+). The enzyme catalyses thiosulfate(out) + ATP + H2O = thiosulfate(in) + ADP + phosphate + H(+). Part of the ABC transporter complex CysAWTP involved in sulfate/thiosulfate import. Responsible for energy coupling to the transport system. This chain is Sulfate/thiosulfate import ATP-binding protein CysA, found in Bradyrhizobium diazoefficiens (strain JCM 10833 / BCRC 13528 / IAM 13628 / NBRC 14792 / USDA 110).